The primary structure comprises 81 residues: Delta-conotoxin-like Ac6.3 (81 aa).

The N-terminal stretch at 1 to 22 (MKLTCVMIVAVLFLTAWTFVTA) is a signal peptide. Positions 23-51 (DDSRNGLENLSPKARHEMKNPEASKSNKR) are excised as a propeptide. 3 disulfide bridges follow: cysteine 54-cysteine 69, cysteine 61-cysteine 73, and cysteine 68-cysteine 78.

It belongs to the conotoxin O1 superfamily. In terms of tissue distribution, expressed by the venom duct.

It localises to the secreted. In terms of biological role, delta-conotoxins bind to site 6 of voltage-gated sodium channels (Nav) and inhibit the inactivation process. The polypeptide is Delta-conotoxin-like Ac6.3 (Conus achatinus (Little frog cone)).